Reading from the N-terminus, the 306-residue chain is Ribonuclease Z (306 aa).

Zn(2+) is bound by residues histidine 63, histidine 65, aspartate 67, histidine 68, histidine 141, aspartate 208, and histidine 266. The Proton acceptor role is filled by aspartate 67.

This sequence belongs to the RNase Z family. Homodimer. It depends on Zn(2+) as a cofactor.

It carries out the reaction Endonucleolytic cleavage of RNA, removing extra 3' nucleotides from tRNA precursor, generating 3' termini of tRNAs. A 3'-hydroxy group is left at the tRNA terminus and a 5'-phosphoryl group is left at the trailer molecule.. In terms of biological role, zinc phosphodiesterase, which displays some tRNA 3'-processing endonuclease activity. Probably involved in tRNA maturation, by removing a 3'-trailer from precursor tRNA. This is Ribonuclease Z from Protochlamydia amoebophila (strain UWE25).